We begin with the raw amino-acid sequence, 290 residues long: 4-diphosphocytidyl-2-C-methyl-D-erythritol kinase (290 aa).

Lysine 13 is a catalytic residue. 96–106 (PMGGGIGGGSS) is an ATP binding site. Aspartate 138 is a catalytic residue.

It belongs to the GHMP kinase family. IspE subfamily.

It carries out the reaction 4-CDP-2-C-methyl-D-erythritol + ATP = 4-CDP-2-C-methyl-D-erythritol 2-phosphate + ADP + H(+). Its pathway is isoprenoid biosynthesis; isopentenyl diphosphate biosynthesis via DXP pathway; isopentenyl diphosphate from 1-deoxy-D-xylulose 5-phosphate: step 3/6. Functionally, catalyzes the phosphorylation of the position 2 hydroxy group of 4-diphosphocytidyl-2C-methyl-D-erythritol. The chain is 4-diphosphocytidyl-2-C-methyl-D-erythritol kinase from Vibrio campbellii (strain ATCC BAA-1116).